The chain runs to 109 residues: Thioredoxin (109 aa).

The Thioredoxin domain occupies 2–109 (ETLLWKDARE…LVEKIKELFK (108 aa)). A disulfide bridge links Cys-27 with Cys-30.

The protein belongs to the thioredoxin family.

Participates in various redox reactions through the reversible oxidation of its active center dithiol to a disulfide and catalyzes dithiol-disulfide exchange reactions. The polypeptide is Thioredoxin (trxA) (Mycoplasmopsis pulmonis (strain UAB CTIP) (Mycoplasma pulmonis)).